The chain runs to 72 residues: uncharacterized protein (72 aa).

Belongs to the asfivirus I73R family.

Its subcellular location is the virion. This is an uncharacterized protein from African swine fever virus (isolate Warthog/Namibia/Wart80/1980) (ASFV).